Here is a 770-residue protein sequence, read N- to C-terminus: Amyloid-beta precursor protein (770 aa).

The N-terminal stretch at 1–17 is a signal peptide; the sequence is MLPSLALLLLTTWTARA. Residues 18 to 701 are Extracellular-facing; the sequence is LEVPTDGNAG…AEDVGSNKGA (684 aa). Residues 28-123 form a GFLD subdomain region; it reads LLAEPQIAMF…PYRCLVGEFV (96 aa). The E1 domain occupies 28 to 189; that stretch reads LLAEPQIAMF…RGVEFVCCPL (162 aa). Disulfide bonds link Cys38-Cys62, Cys73-Cys117, Cys98-Cys105, Cys133-Cys187, Cys144-Cys174, and Cys158-Cys186. 96–110 lines the heparin pocket; that stretch reads NWCKRSRKQCKTHPH. The tract at residues 131–189 is cuBD subdomain; that stretch reads DKCKFLHQERMDVCETHLHWHTVAKETCSEKSTNLHDYGMLLPCGIDKFRGVEFVCCPL. The copper-binding stretch occupies residues 135 to 155; the sequence is FLHQERMDVCETHLHWHTVAK. Cu(2+) is bound by residues His147, His151, and Tyr168. Residues 181–188 form a zinc-binding region; sequence GVEFVCCP. Zn(2+) is bound by residues Glu183, Cys186, and Cys187. The segment covering 196-207 has biased composition (acidic residues); the sequence is IDSADAEEDDSD. The interval 196–281 is disordered; it reads IDSADAEEDD…IATTTTTTTE (86 aa). Ser198 bears the Phosphoserine; by CK2 mark. Residue Ser206 is modified to Phosphoserine; by CK1. Tyr217 carries the sulfotyrosine modification. Residues 228-264 are compositionally biased toward acidic residues; that stretch reads VAEEEEVADVEEEEADDDEDVEDGDEVEEEAEEPYEE. The span at 268 to 281 shows a compositional bias: low complexity; sequence KTTSIATTTTTTTE. Intrachain disulfides connect Cys291-Cys341, Cys300-Cys324, and Cys316-Cys337. Residues 291–341 form the BPTI/Kunitz inhibitor domain; that stretch reads CSEQAETGPCRSMISRWYFDVTEGKCAPFFYGGCGGNRNNFDTEEYCMAVC. Residue Tyr336 is modified to Sulfotyrosine. Residues 344 to 365 carry the OX-2 motif; sequence VMSQNLLKTSGEPVSQGPVKLP. In terms of domain architecture, E2 spans 374–565; the sequence is AVDKYLETPG…EEIQDEVDEL (192 aa). Residues 391–423 form a heparin-binding region; that stretch reads FQKAKERLEAKHRERMSQVMREWEEAERQAKNL. The residue at position 441 (Ser441) is a Phosphoserine. A heparin-binding region spans residues 491–522; the sequence is FNMLKKYVRAEQKDRQHTLKHFEHVRMVDPKK. Position 497 is a phosphotyrosine (Tyr497). Residues 523 to 540 are collagen-binding; the sequence is AAQIRSQVMTHLRVIYER. 2 N-linked (GlcNAc...) asparagine glycosylation sites follow: Asn542 and Asn571. An O-linked (Xyl...) (chondroitin sulfate) serine glycan is attached at Ser656. Cu(2+) contacts are provided by His677, Tyr681, His684, and His685. The Zn(2+) site is built by His677, Tyr681, His684, and His685. Residues 695–722 form an interaction with PSEN1 region; sequence VGSNKGAIIGLMVGGVVIATVIVITLVM. A helical transmembrane segment spans residues 702-722; sequence IIGLMVGGVVIATVIVITLVM. The Cytoplasmic portion of the chain corresponds to 723-770; sequence LKKKQYTSIHHGVVEVDAAVTPEERHLSKMQQNGYENPTYKFFEQMQN. Positions 724-734 match the Basolateral sorting signal motif; the sequence is KKKQYTSIHHG. Phosphothreonine is present on Thr729. Ser730 carries the phosphoserine; by APP-kinase I modification. The tract at residues 732–751 is interaction with G(o)-alpha; sequence HHGVVEVDAAVTPEERHLSK. At Thr743 the chain carries Phosphothreonine; by CDK5 and MAPK10. The tract at residues 756-770 is required for the interaction with KIF5B and for anterograde transport in axons; that stretch reads GYENPTYKFFEQMQN. Position 757 is a phosphotyrosine; by ABL1 (Tyr757). Positions 757-762 match the YENPXY motif; contains endocytosis signal motif; sequence YENPTY. Residue Lys763 forms a Glycyl lysine isopeptide (Lys-Gly) (interchain with G-Cter in ubiquitin) linkage.

Belongs to the APP family. Binds, via its C-terminus, to the PID domain of several cytoplasmic proteins, including APBB family members, the APBA family, MAPK8IP1, SHC1 and NUMB and DAB1. Binding to DAB1 inhibits its serine phosphorylation. Interacts (via NPXY motif) with DAB2 (via PID domain); the interaction is impaired by tyrosine phosphorylation of the NPXY motif. Also interacts with GPCR-like protein BPP, APPBP1, IB1, KNS2 (via its TPR domains), APPBP2 (via BaSS) and DDB1. In vitro, it binds MAPT via the MT-binding domains. Associates with microtubules in the presence of ATP and in a kinesin-dependent manner. Interacts, through a C-terminal domain, with GNAO1. Amyloid-beta protein 42 binds CHRNA7 in hippocampal neurons. Amyloid-beta associates with HADH2. Interacts with CPEB1, ANKS1B and AGER. Interacts with ITM2B. Interacts with ITM2C. Interacts with IDE. Can form homodimers; dimerization is enhanced in the presence of Cu(2+) ions. Can form homodimers; this is promoted by heparin binding. Amyloid-beta protein 40 interacts with S100A9. CTF-alpha product of APP interacts with GSAP. Isoform APP695 interacts with SORL1 (via N-terminal ectodomain); this interaction retains APP in the trans-Golgi network and reduces processing into soluble APP-alpha and amyloid-beta peptides. Isoform APP770 interacts with SORL1. The C99 fragment also interacts with SORL1. Interacts with PLD3. Interacts with VDAC1. Interacts with NSG1; could regulate APP processing. Amyloid-beta protein 42 interacts with FPR2. Interacts (via transmembrane region) with PSEN1; the interaction is direct. Interacts with LRRK2. Interacts (via cytoplasmic domain) with KIF5B. Interacts (via C-terminus) with APBB2/FE65L1 (via C-terminus). Interacts (via intracellular domain) with APBB3. In terms of processing, proteolytically processed under normal cellular conditions. Cleavage either by alpha-secretase, beta-secretase or theta-secretase leads to generation and extracellular release of soluble APP peptides, S-APP-alpha and S-APP-beta, and the retention of corresponding membrane-anchored C-terminal fragments, C80, C83 and C99. Subsequent processing of C80 and C83 by gamma-secretase yields P3 peptides. This is the major secretory pathway and is non-amyloidogenic. Alternatively, presenilin/nicastrin-mediated gamma-secretase processing of C99 releases the amyloid-beta proteins, amyloid-beta protein 40 and amyloid-beta protein 42, major components of amyloid plaques, and the cytotoxic C-terminal fragments, gamma-CTF(50), gamma-CTF(57) and gamma-CTF(59). PSEN1 cleavage is more efficient with C83 than with C99 as substrate (in vitro). Amyloid-beta protein 40 and Amyloid-beta protein 42 are cleaved by ACE. Many other minor amyloid-beta peptides, amyloid-beta 1-X peptides, are found in cerebral spinal fluid (CSF) including the amyloid-beta X-15 peptides, produced from the cleavage by alpha-secretase. Post-translationally, proteolytically cleaved by caspases during neuronal apoptosis. Cleavage at Asp-739 by either CASP6, CASP8 or CASP9 results in the production of the neurotoxic C31 peptide and the increased production of amyloid-beta peptides. N- and O-glycosylated. In terms of processing, phosphorylation in the C-terminal on tyrosine, threonine and serine residues is neuron-specific. Phosphorylation can affect APP processing, neuronal differentiation and interaction with other proteins. Phosphorylated on Thr-743 in neuronal cells by Cdc5 kinase and Mapk10, in dividing cells by Cdc2 kinase in a cell-cycle dependent manner with maximal levels at the G2/M phase and, in vitro, by GSK-3-beta. The Thr-743 phosphorylated form causes a conformational change which reduces binding of Fe65 family members. In dopaminergic (DA) neurons, phosphorylation on Thr-743 by LRKK2 promotes the production and the nuclear translocation of the APP intracellular domain (AICD) which induces DA neuron apoptosis. Phosphorylation on Tyr-757 is required for SHC binding. Phosphorylated in the extracellular domain by casein kinases on both soluble and membrane-bound APP. This phosphorylation is inhibited by heparin. Post-translationally, N- and O-glycosylated. O-linkage of chondroitin sulfate to the L-APP isoforms produces the APP proteoglycan core proteins, the appicans. Extracellular binding and reduction of copper, results in a corresponding oxidation of Cys-144 and Cys-158, and the formation of a disulfide bond. In terms of processing, trophic-factor deprivation triggers the cleavage of surface APP by beta-secretase to release sAPP-beta which is further cleaved to release an N-terminal fragment of APP (N-APP). Post-translationally, amyloid-beta peptides are degraded by IDE. Sulfated on tyrosine residues. In terms of tissue distribution, isoform APP695 is the major isoform found in brain. The longer isoforms containing the BPTI domain are predominantly expressed in peripheral organs such as muscle and liver.

Its subcellular location is the cell membrane. It is found in the membrane. It localises to the perikaryon. The protein resides in the cell projection. The protein localises to the growth cone. Its subcellular location is the clathrin-coated pit. It is found in the early endosome. It localises to the cytoplasmic vesicle. The protein resides in the endoplasmic reticulum. The protein localises to the golgi apparatus. Its subcellular location is the secreted. It is found in the cell surface. It localises to the nucleus. The protein resides in the cytoplasm. Functions as a cell surface receptor and performs physiological functions on the surface of neurons relevant to neurite growth, neuronal adhesion and axonogenesis. Interaction between APP molecules on neighboring cells promotes synaptogenesis. Involved in cell mobility and transcription regulation through protein-protein interactions. Can promote transcription activation through binding to APBB1-KAT5 and inhibit Notch signaling through interaction with Numb. Couples to apoptosis-inducing pathways such as those mediated by G(o) and JIP. Inhibits G(o)-alpha ATPase activity. Acts as a kinesin I membrane receptor, mediating the axonal transport of beta-secretase and presenilin 1. By acting as a kinesin I membrane receptor, plays a role in axonal anterograde transport of cargo towards synapses in axons. May be involved in copper homeostasis/oxidative stress through copper ion reduction. In vitro, copper-metallated APP induces neuronal death directly or is potentiated through Cu(2+)-mediated low-density lipoprotein oxidation. Can regulate neurite outgrowth through binding to components of the extracellular matrix such as heparin and collagen I and IV. Induces a AGER-dependent pathway that involves activation of p38 MAPK, resulting in internalization of amyloid-beta peptide and mitochondrial dysfunction in cultured cortical neurons. Provides Cu(2+) ions for GPC1 which are required for release of nitric oxide (NO) and subsequent degradation of the heparan sulfate chains on GPC1. In terms of biological role, amyloid-beta peptides are lipophilic metal chelators with metal-reducing activity. Binds transient metals such as copper, zinc and iron. Amyloid-beta peptides bind to lipoproteins and apolipoproteins E and J in the CSF and to HDL particles in plasma, inhibiting metal-catalyzed oxidation of lipoproteins. Also bind GPC1 in lipid rafts. Its function is as follows. Appicans elicit adhesion of neural cells to the extracellular matrix and may regulate neurite outgrowth in the brain. Functionally, the gamma-CTF peptides as well as the caspase-cleaved peptides, including C31, are potent enhancers of neuronal apoptosis. The chain is Amyloid-beta precursor protein from Cavia porcellus (Guinea pig).